Consider the following 257-residue polypeptide: NAD-dependent protein deacylase (257 aa).

The Deacetylase sirtuin-type domain maps to 1 to 252 (MLGHAAKLLA…LRRVKDIMAE (252 aa)). 20 to 39 (GAGISAESGIPTFRGRNGLW) lines the NAD(+) pocket. Substrate is bound by residues Tyr-64 and Arg-67. 98 to 101 (QNVD) contacts NAD(+). His-116 (proton acceptor) is an active-site residue. Positions 124, 127, 151, and 154 each coordinate Zn(2+). Residues 191–193 (GTS), 217–219 (NVE), and Ala-235 contribute to the NAD(+) site.

This sequence belongs to the sirtuin family. Class III subfamily. The cofactor is Zn(2+).

It is found in the cytoplasm. The enzyme catalyses N(6)-acetyl-L-lysyl-[protein] + NAD(+) + H2O = 2''-O-acetyl-ADP-D-ribose + nicotinamide + L-lysyl-[protein]. It catalyses the reaction N(6)-succinyl-L-lysyl-[protein] + NAD(+) + H2O = 2''-O-succinyl-ADP-D-ribose + nicotinamide + L-lysyl-[protein]. Functionally, NAD-dependent lysine deacetylase and desuccinylase that specifically removes acetyl and succinyl groups on target proteins. Modulates the activities of several proteins which are inactive in their acylated form. Deacetylates the N-terminal lysine residue of Alba, the major archaeal chromatin protein and that, in turn, increases Alba's DNA binding affinity, thereby repressing transcription. In Thermococcus kodakarensis (strain ATCC BAA-918 / JCM 12380 / KOD1) (Pyrococcus kodakaraensis (strain KOD1)), this protein is NAD-dependent protein deacylase.